Reading from the N-terminus, the 476-residue chain is NADH-quinone oxidoreductase subunit N (476 aa).

Transmembrane regions (helical) follow at residues 7-27 (LTVE…GLLV), 33-53 (RGIA…AFGM), 59-79 (VVLG…LFLV), 100-120 (GEYY…ASSG), 122-142 (LVSL…LAAF), 156-176 (YVLL…LVYG), 199-219 (LLLG…AVPF), 237-257 (FLSV…FFGA), 265-285 (WVQL…LVAI), 305-325 (LLLG…YYAM), 363-383 (VAAL…MAGF), 399-419 (IWLA…YLLV), and 437-457 (VAPG…ILGI).

Belongs to the complex I subunit 2 family. NDH-1 is composed of 14 different subunits. Subunits NuoA, H, J, K, L, M, N constitute the membrane sector of the complex.

The protein localises to the cell membrane. The enzyme catalyses a quinone + NADH + 5 H(+)(in) = a quinol + NAD(+) + 4 H(+)(out). Functionally, NDH-1 shuttles electrons from NADH, via FMN and iron-sulfur (Fe-S) centers, to quinones in the respiratory chain. The immediate electron acceptor for the enzyme in this species is believed to be a menaquinone. Couples the redox reaction to proton translocation (for every two electrons transferred, four hydrogen ions are translocated across the cytoplasmic membrane), and thus conserves the redox energy in a proton gradient. The sequence is that of NADH-quinone oxidoreductase subunit N from Moorella thermoacetica (strain ATCC 39073 / JCM 9320).